A 252-amino-acid chain; its full sequence is Outer membrane protein P1 (252 aa).

The first 23 residues, methionine 1 to alanine 23, serve as a signal peptide directing secretion.

The protein belongs to the Coxiella porin P1 (CPP1) (TC 1.B.43) family. In terms of assembly, may form trimers.

Its subcellular location is the cell outer membrane. Able to form a pore in lipid bilayers. This is Outer membrane protein P1 (ompP1) from Coxiella burnetii (strain RSA 493 / Nine Mile phase I).